The chain runs to 2067 residues: Negative regulator of mitosis (2067 aa).

Polar residues predominate over residues 100 to 118 (SLAIPQTTSQQSNRPSGSE). 3 disordered regions span residues 100–132 (SLAI…STSK), 332–408 (ESIP…DDFA), and 452–480 (GSQS…GFNP). A Nuclear localization signal motif is present at residues 336–347 (SHRKKKRRDTGG). Residues 336–355 (SHRKKKRRDTGGTRSKRRSS) are compositionally biased toward basic residues. Residues 384–396 (WNASVMSHSQYST) show a composition bias toward polar residues. PC repeat units follow at residues 1434 to 1465 (AGIM…ADQE), 1482 to 1520 (AAGF…TKNV), 1532 to 1562 (GATI…TVRF), and 1625 to 1659 (GLCF…ISRL). Residues 2020–2042 (FPSESDEEKRDRQETGSMPSSGH) form a disordered region.

Belongs to the APC1 family.

Negative regulator of mitosis in E.nidulans. This protein is part of a regulatory pathway that includes the nimA protein kinase. It is required to prevent premature entry into mitosis. Mutations to this protein both cause cells to enter mitosis and prevent them from leaving mitosis. The sequence is that of Negative regulator of mitosis (bimE) from Emericella nidulans (strain FGSC A4 / ATCC 38163 / CBS 112.46 / NRRL 194 / M139) (Aspergillus nidulans).